The following is a 320-amino-acid chain: UDP-3-O-acyl-N-acetylglucosamine deacetylase (320 aa).

Zn(2+) is bound by residues His-92, His-251, and Asp-255. Residue His-278 is the Proton donor of the active site.

The protein belongs to the LpxC family. It depends on Zn(2+) as a cofactor.

The enzyme catalyses a UDP-3-O-[(3R)-3-hydroxyacyl]-N-acetyl-alpha-D-glucosamine + H2O = a UDP-3-O-[(3R)-3-hydroxyacyl]-alpha-D-glucosamine + acetate. The protein operates within glycolipid biosynthesis; lipid IV(A) biosynthesis; lipid IV(A) from (3R)-3-hydroxytetradecanoyl-[acyl-carrier-protein] and UDP-N-acetyl-alpha-D-glucosamine: step 2/6. In terms of biological role, catalyzes the hydrolysis of UDP-3-O-myristoyl-N-acetylglucosamine to form UDP-3-O-myristoylglucosamine and acetate, the committed step in lipid A biosynthesis. The polypeptide is UDP-3-O-acyl-N-acetylglucosamine deacetylase (Psychrobacter arcticus (strain DSM 17307 / VKM B-2377 / 273-4)).